The sequence spans 360 residues: Dihydroorotate dehydrogenase (quinone) (360 aa).

FMN-binding positions include 60 to 64 (AGFDK) and T84. K64 contributes to the substrate binding site. 109 to 113 (NRMGF) is a substrate binding site. Residues N137 and N168 each coordinate FMN. A substrate-binding site is contributed by N168. S171 acts as the Nucleophile in catalysis. N173 lines the substrate pocket. FMN-binding residues include K213 and S241. 242–243 (NT) is a binding site for substrate. FMN is bound by residues G264, G293, and 314–315 (YS).

Belongs to the dihydroorotate dehydrogenase family. Type 2 subfamily. As to quaternary structure, monomer. FMN is required as a cofactor.

The protein resides in the cell membrane. It catalyses the reaction (S)-dihydroorotate + a quinone = orotate + a quinol. It participates in pyrimidine metabolism; UMP biosynthesis via de novo pathway; orotate from (S)-dihydroorotate (quinone route): step 1/1. Catalyzes the conversion of dihydroorotate to orotate with quinone as electron acceptor. The polypeptide is Dihydroorotate dehydrogenase (quinone) (Bartonella tribocorum (strain CIP 105476 / IBS 506)).